A 334-amino-acid chain; its full sequence is Geranylgeranyl pyrophosphate synthase idtG (334 aa).

3 residues coordinate isopentenyl diphosphate: K49, R52, and H81. Mg(2+) is bound by residues D88 and D92. R97 contacts dimethylallyl diphosphate. Isopentenyl diphosphate is bound at residue R98. Dimethylallyl diphosphate is bound by residues K175, T176, and Q209. Residue D212 participates in Mg(2+) binding. Residues N216, K226, and K236 each coordinate dimethylallyl diphosphate.

Belongs to the FPP/GGPP synthase family. The cofactor is Mg(2+).

The catalysed reaction is isopentenyl diphosphate + dimethylallyl diphosphate = (2E)-geranyl diphosphate + diphosphate. The enzyme catalyses isopentenyl diphosphate + (2E)-geranyl diphosphate = (2E,6E)-farnesyl diphosphate + diphosphate. It carries out the reaction isopentenyl diphosphate + (2E,6E)-farnesyl diphosphate = (2E,6E,10E)-geranylgeranyl diphosphate + diphosphate. The protein operates within secondary metabolite biosynthesis. Functionally, geranylgeranyl pyrophosphate synthase; part of the gene cluster that mediates the biosynthesis of paspalitrems, indole-diterpene (IDT) mycotoxins that are potent tremorgens in mammals. The geranylgeranyl diphosphate (GGPP) synthase idtG is proposed to catalyze the first step in IDT biosynthesis via catalysis of a series of iterative condensations of isopentenyl diphosphate (IPP) with dimethylallyl diphosphate (DMAPP), geranyl diphosphate (GPP), and farnesyl diphosphate (FPP), to form GGPP. Condensation of indole-3-glycerol phosphate with GGPP by the prenyltransferase idtC then forms 3-geranylgeranylindole (3-GGI). Epoxidation of the two terminal alkenes of the geranylgeranyl moiety by the FAD-dependent monooxygenase idtM, and cyclization by the terpene cyclase idtB then leads to the production of paspaline. The cytochrome P450 monooxygenase idtP then catalyzes oxidative elimination of the pendant methyl group at C-12 of paspaline and generates the C-10 ketone to yield 13-desoxypaxilline. The cytochrome P450 monooxygenase idtQ may catalyze the C-13 oxidation of 13-desoxypaxilline to afford paxilline. Considering that both paspalicine and paxilline were detected in C.paspali, idtQ also catalyzes the formation of paspalinine from 13-desoxypaxilline via paspalicine as an intermediate. Finally, the alpha-prenyltransferase idtF prenylates paspalinine at the C-20 or the C-21 positions to yield paspalitrems A and C, respectively. The hydroxylation of paspalitrem A at C-32 by a still unknown oxidase affords paspalitrem B. The sequence is that of Geranylgeranyl pyrophosphate synthase idtG from Claviceps paspali (Rye ergot fungus).